A 395-amino-acid chain; its full sequence is THP3 homolog C2A9.11c (395 aa).

The interval 91–127 is disordered; sequence LLSEEDEVDKKEKRRRRFENGSRSQNNAKSEELKVNP. One can recognise a PCI domain in the interval 218-384; it reads DVGEYNQCQT…STDRFEKCMK (167 aa).

The protein belongs to the THP3 family.

Its subcellular location is the cytoplasm. The protein localises to the nucleus. Required for transcription elongation. May also be involved in pre-mRNA splicing. This Schizosaccharomyces pombe (strain 972 / ATCC 24843) (Fission yeast) protein is THP3 homolog C2A9.11c.